A 313-amino-acid polypeptide reads, in one-letter code: tRNA dimethylallyltransferase (313 aa).

An ATP-binding site is contributed by 9-16 (GPTAVGKT). Substrate is bound at residue 11 to 16 (TAVGKT). Residues 34 to 37 (DSMQ) are interaction with substrate tRNA.

Belongs to the IPP transferase family. As to quaternary structure, monomer. It depends on Mg(2+) as a cofactor.

It catalyses the reaction adenosine(37) in tRNA + dimethylallyl diphosphate = N(6)-dimethylallyladenosine(37) in tRNA + diphosphate. In terms of biological role, catalyzes the transfer of a dimethylallyl group onto the adenine at position 37 in tRNAs that read codons beginning with uridine, leading to the formation of N6-(dimethylallyl)adenosine (i(6)A). The sequence is that of tRNA dimethylallyltransferase from Lachnoclostridium phytofermentans (strain ATCC 700394 / DSM 18823 / ISDg) (Clostridium phytofermentans).